We begin with the raw amino-acid sequence, 144 residues long: Cell division protein SepF (144 aa).

The protein belongs to the SepF family. In terms of assembly, homodimer. Interacts with FtsZ.

Its subcellular location is the cytoplasm. In terms of biological role, cell division protein that is part of the divisome complex and is recruited early to the Z-ring. Probably stimulates Z-ring formation, perhaps through the cross-linking of FtsZ protofilaments. Its function overlaps with FtsA. The sequence is that of Cell division protein SepF from Geobacillus sp. (strain WCH70).